The following is a 193-amino-acid chain: Orotate phosphoribosyltransferase (193 aa).

Position 114–122 (Glu114–Ser122) interacts with 5-phospho-alpha-D-ribose 1-diphosphate. Residues Thr118 and Arg146 each coordinate orotate.

Belongs to the purine/pyrimidine phosphoribosyltransferase family. PyrE subfamily. In terms of assembly, homodimer. Mg(2+) serves as cofactor.

It catalyses the reaction orotidine 5'-phosphate + diphosphate = orotate + 5-phospho-alpha-D-ribose 1-diphosphate. It participates in pyrimidine metabolism; UMP biosynthesis via de novo pathway; UMP from orotate: step 1/2. In terms of biological role, catalyzes the transfer of a ribosyl phosphate group from 5-phosphoribose 1-diphosphate to orotate, leading to the formation of orotidine monophosphate (OMP). The protein is Orotate phosphoribosyltransferase of Chlorobium phaeobacteroides (strain BS1).